Here is a 310-residue protein sequence, read N- to C-terminus: Protoheme IX farnesyltransferase 2 (310 aa).

The next 9 helical transmembrane spans lie at P25–G45, L49–I69, H98–T118, L121–M141, S145–C165, V176–F196, I222–T242, A245–Y265, and Q277–F297.

It belongs to the UbiA prenyltransferase family. Protoheme IX farnesyltransferase subfamily.

The protein resides in the cell inner membrane. The catalysed reaction is heme b + (2E,6E)-farnesyl diphosphate + H2O = Fe(II)-heme o + diphosphate. Its pathway is porphyrin-containing compound metabolism; heme O biosynthesis; heme O from protoheme: step 1/1. In terms of biological role, converts heme B (protoheme IX) to heme O by substitution of the vinyl group on carbon 2 of heme B porphyrin ring with a hydroxyethyl farnesyl side group. In Shewanella sp. (strain ANA-3), this protein is Protoheme IX farnesyltransferase 2.